Consider the following 233-residue polypeptide: Somatolactin (233 aa).

A signal peptide spans 1-24 (MNMMQVMQSVVWAVLLWPCLVSLG). Intrachain disulfides connect C29-C39, C89-C205, and C222-C230.

Belongs to the somatotropin/prolactin family. As to expression, pituitary gland.

The protein resides in the secreted. May be associated with ion regulation and reproduction. In Oncorhynchus keta (Chum salmon), this protein is Somatolactin.